A 94-amino-acid polypeptide reads, in one-letter code: Integration host factor subunit beta (94 aa).

The protein belongs to the bacterial histone-like protein family. As to quaternary structure, heterodimer of an alpha and a beta chain.

Functionally, this protein is one of the two subunits of integration host factor, a specific DNA-binding protein that functions in genetic recombination as well as in transcriptional and translational control. This is Integration host factor subunit beta from Escherichia coli O127:H6 (strain E2348/69 / EPEC).